The following is a 716-amino-acid chain: Exocyst complex component 8 (716 aa).

S15 bears the Phosphoserine mark. Low complexity predominate over residues 110–119 (STGEDTAGAG). The interval 110–149 (STGEDTAGAGPRERGAAQAGFLPGPAGVPREGPGTGEEGK) is disordered. Residues 173–273 (YLVYNGDLVE…WLEVLEETKR (101 aa)) form the PH domain. Positions 275–284 (LSDKRRREQE) are enriched in basic and acidic residues. The segment at 275–319 (LSDKRRREQEEAAALRAPPPVTSKGSNPFEDEAEEELATPEAEEE) is disordered. The span at 303–319 (FEDEAEEELATPEAEEE) shows a compositional bias: acidic residues. T313 carries the phosphothreonine modification.

Belongs to the EXO84 family. As to quaternary structure, the exocyst complex is composed of EXOC1, EXOC2, EXOC3, EXOC4, EXOC5, EXOC6, EXOC7 and EXOC8. Interacts (via PH domain) with GTP-bound RALA and RALB. Interacts with SH3BP1; required for the localization of both SH3BP1 and the exocyst to the leading edge of migrating cells.

It is found in the cytoplasm. The protein localises to the perinuclear region. The protein resides in the cell projection. It localises to the growth cone. In terms of biological role, component of the exocyst complex involved in the docking of exocytic vesicles with fusion sites on the plasma membrane. This chain is Exocyst complex component 8 (Exoc8), found in Rattus norvegicus (Rat).